Here is a 494-residue protein sequence, read N- to C-terminus: Bifunctional protein HldE (494 aa).

The tract at residues 1–334 (MPTPILDFDA…RKILPHAYLA (334 aa)) is ribokinase. Residue 209–212 (NRKE) coordinates ATP. Aspartate 279 is a catalytic residue. Positions 362-494 (FTNGCFDILH…LVHRARGGAK (133 aa)) are cytidylyltransferase.

In the N-terminal section; belongs to the carbohydrate kinase PfkB family. It in the C-terminal section; belongs to the cytidylyltransferase family. As to quaternary structure, homodimer.

The catalysed reaction is D-glycero-beta-D-manno-heptose 7-phosphate + ATP = D-glycero-beta-D-manno-heptose 1,7-bisphosphate + ADP + H(+). It carries out the reaction D-glycero-beta-D-manno-heptose 1-phosphate + ATP + H(+) = ADP-D-glycero-beta-D-manno-heptose + diphosphate. It participates in nucleotide-sugar biosynthesis; ADP-L-glycero-beta-D-manno-heptose biosynthesis; ADP-L-glycero-beta-D-manno-heptose from D-glycero-beta-D-manno-heptose 7-phosphate: step 1/4. It functions in the pathway nucleotide-sugar biosynthesis; ADP-L-glycero-beta-D-manno-heptose biosynthesis; ADP-L-glycero-beta-D-manno-heptose from D-glycero-beta-D-manno-heptose 7-phosphate: step 3/4. In terms of biological role, catalyzes the phosphorylation of D-glycero-D-manno-heptose 7-phosphate at the C-1 position to selectively form D-glycero-beta-D-manno-heptose-1,7-bisphosphate. Functionally, catalyzes the ADP transfer from ATP to D-glycero-beta-D-manno-heptose 1-phosphate, yielding ADP-D-glycero-beta-D-manno-heptose. In Bradyrhizobium diazoefficiens (strain JCM 10833 / BCRC 13528 / IAM 13628 / NBRC 14792 / USDA 110), this protein is Bifunctional protein HldE.